A 349-amino-acid polypeptide reads, in one-letter code: Small ribosomal subunit protein uS2 (349 aa).

It belongs to the universal ribosomal protein uS2 family.

The polypeptide is Small ribosomal subunit protein uS2 (Methylocella silvestris (strain DSM 15510 / CIP 108128 / LMG 27833 / NCIMB 13906 / BL2)).